A 545-amino-acid polypeptide reads, in one-letter code: Chaperonin GroEL 2 (545 aa).

ATP is bound by residues 29–32 (TLGP), 86–90 (DGTTT), G413, 479–481 (NAA), and D495.

Belongs to the chaperonin (HSP60) family. As to quaternary structure, forms a cylinder of 14 subunits composed of two heptameric rings stacked back-to-back. Interacts with the co-chaperonin GroES.

It localises to the cytoplasm. It carries out the reaction ATP + H2O + a folded polypeptide = ADP + phosphate + an unfolded polypeptide.. Together with its co-chaperonin GroES, plays an essential role in assisting protein folding. The GroEL-GroES system forms a nano-cage that allows encapsulation of the non-native substrate proteins and provides a physical environment optimized to promote and accelerate protein folding. This is Chaperonin GroEL 2 from Prochlorococcus marinus (strain MIT 9215).